Reading from the N-terminus, the 88-residue chain is uncharacterized protein (88 aa).

This is an uncharacterized protein from Archaeoglobus fulgidus (strain ATCC 49558 / DSM 4304 / JCM 9628 / NBRC 100126 / VC-16).